The following is a 25-amino-acid chain: Caerin-1.6 (25 aa).

The residue at position 25 (Leu-25) is a Leucine amide.

This sequence belongs to the frog skin active peptide (FSAP) family. Caerin subfamily. As to expression, expressed by the skin dorsal glands.

Its subcellular location is the secreted. In terms of biological role, antimicrobial peptide. Adopts an alpha helical conformation which can disrupt bacterial membranes. Strongly inhibits the formation of NO by neuronal nitric oxide synthase (nNOS) at micromolar concentrations. Acts by a non-competitive mechanism, probably by binding to calcium/calmodulin and as a consequence blocking calmodulin attachment to nNOS. Functionally, does not show antimicrobial activity. This Ranoidea chloris (Red-eyed tree frog) protein is Caerin-1.6.